Consider the following 178-residue polypeptide: Cell division protein ZapC (178 aa).

This sequence belongs to the ZapC family. In terms of assembly, interacts directly with FtsZ.

Its subcellular location is the cytoplasm. In terms of biological role, contributes to the efficiency of the cell division process by stabilizing the polymeric form of the cell division protein FtsZ. Acts by promoting interactions between FtsZ protofilaments and suppressing the GTPase activity of FtsZ. The sequence is that of Cell division protein ZapC from Aeromonas hydrophila subsp. hydrophila (strain ATCC 7966 / DSM 30187 / BCRC 13018 / CCUG 14551 / JCM 1027 / KCTC 2358 / NCIMB 9240 / NCTC 8049).